Consider the following 688-residue polypeptide: UvrABC system protein C (688 aa).

One can recognise a GIY-YIG domain in the interval Leu-11–Ile-90. The region spanning Gly-200–Thr-235 is the UVR domain.

Belongs to the UvrC family. In terms of assembly, interacts with UvrB in an incision complex.

The protein resides in the cytoplasm. Functionally, the UvrABC repair system catalyzes the recognition and processing of DNA lesions. UvrC both incises the 5' and 3' sides of the lesion. The N-terminal half is responsible for the 3' incision and the C-terminal half is responsible for the 5' incision. This chain is UvrABC system protein C, found in Nitratidesulfovibrio vulgaris (strain ATCC 29579 / DSM 644 / CCUG 34227 / NCIMB 8303 / VKM B-1760 / Hildenborough) (Desulfovibrio vulgaris).